Here is a 161-residue protein sequence, read N- to C-terminus: SsrA-binding protein (161 aa).

A disordered region spans residues 140–161 (KRESIKERDWKRDKQRLLKDRG).

It belongs to the SmpB family.

It is found in the cytoplasm. Functionally, required for rescue of stalled ribosomes mediated by trans-translation. Binds to transfer-messenger RNA (tmRNA), required for stable association of tmRNA with ribosomes. tmRNA and SmpB together mimic tRNA shape, replacing the anticodon stem-loop with SmpB. tmRNA is encoded by the ssrA gene; the 2 termini fold to resemble tRNA(Ala) and it encodes a 'tag peptide', a short internal open reading frame. During trans-translation Ala-aminoacylated tmRNA acts like a tRNA, entering the A-site of stalled ribosomes, displacing the stalled mRNA. The ribosome then switches to translate the ORF on the tmRNA; the nascent peptide is terminated with the 'tag peptide' encoded by the tmRNA and targeted for degradation. The ribosome is freed to recommence translation, which seems to be the essential function of trans-translation. The sequence is that of SsrA-binding protein from Sphingopyxis alaskensis (strain DSM 13593 / LMG 18877 / RB2256) (Sphingomonas alaskensis).